The following is a 188-amino-acid chain: Large ribosomal subunit protein bL35m (188 aa).

This sequence belongs to the bacterial ribosomal protein bL35 family.

Its subcellular location is the mitochondrion. This is Large ribosomal subunit protein bL35m (MRPL35) from Pongo abelii (Sumatran orangutan).